A 1074-amino-acid polypeptide reads, in one-letter code: DNA helicase B (1074 aa).

3 disordered regions span residues 1–38 (MARQ…EEEF), 380–420 (GAKP…HVRS), and 932–1014 (GSCA…FDEE). Over residues 20-38 (DDEEEDCAQEEEGEQEEEF) the composition is skewed to acidic residues. Polar residues predominate over residues 934 to 946 (CAPSTGFASQPSS). Phosphoserine occurs at positions 942 and 946. Phosphothreonine is present on Thr-992. A phosphoserine mark is found at Ser-1015 and Ser-1026. The Nuclear export signal signature appears at 1022–1046 (VEAPSPQVSSVFQNMRLNTLTPRQL). The interval 1040–1074 (TLTPRQLFKPTDNQDTGTAGVADDANDPSNQEMEM) is disordered.

Belongs to the RecD family. HELB subfamily. Binds to RPA1; this interaction promotes HELB recruitment to chromatin following DNA damage. Interacts with at least two subunits of the DNA polymerase alpha complex. Interacts with CDC45. Interacts with TOPB1. Post-translationally, phosphorylated at Ser-942 by CDK2 during the G1/S transition, resulting in its nuclear export into the cytoplasm. As S phase progresses, its exclusion from the nucleus promotes the activation of long-range resection.

The protein resides in the nucleus. Its subcellular location is the cytoplasm. It localises to the chromosome. It catalyses the reaction ATP + H2O = ADP + phosphate + H(+). 5'-3' DNA helicase involved in DNA damage response by acting as an inhibitor of DNA end resection. Recruitment to single-stranded DNA (ssDNA) following DNA damage leads to inhibit the nucleases catalyzing resection, such as EXO1, BLM and DNA2, possibly via the 5'-3' ssDNA translocase activity of HELB. As cells approach S phase, DNA end resection is promoted by the nuclear export of HELB following phosphorylation. Acts independently of TP53BP1. Unwinds duplex DNA with 5'-3' polarity. Has single-strand DNA-dependent ATPase and DNA helicase activities. Prefers ATP and dATP as substrates. During S phase, may facilitate cellular recovery from replication stress. The polypeptide is DNA helicase B (Mus musculus (Mouse)).